Here is a 288-residue protein sequence, read N- to C-terminus: 4-diphosphocytidyl-2-C-methyl-D-erythritol kinase (288 aa).

Lysine 13 is a catalytic residue. 96-106 contacts ATP; the sequence is PMGGGIGGGSS. The active site involves aspartate 138.

Belongs to the GHMP kinase family. IspE subfamily.

The enzyme catalyses 4-CDP-2-C-methyl-D-erythritol + ATP = 4-CDP-2-C-methyl-D-erythritol 2-phosphate + ADP + H(+). Its pathway is isoprenoid biosynthesis; isopentenyl diphosphate biosynthesis via DXP pathway; isopentenyl diphosphate from 1-deoxy-D-xylulose 5-phosphate: step 3/6. Its function is as follows. Catalyzes the phosphorylation of the position 2 hydroxy group of 4-diphosphocytidyl-2C-methyl-D-erythritol. The protein is 4-diphosphocytidyl-2-C-methyl-D-erythritol kinase of Aliivibrio fischeri (strain MJ11) (Vibrio fischeri).